A 31-amino-acid chain; its full sequence is Cytochrome b6-f complex subunit 6 (31 aa).

Residues 3 to 23 (AIVAYIGFLALFTGIAAGLLF) form a helical membrane-spanning segment.

Belongs to the PetL family. As to quaternary structure, the 4 large subunits of the cytochrome b6-f complex are cytochrome b6, subunit IV (17 kDa polypeptide, PetD), cytochrome f and the Rieske protein, while the 4 small subunits are PetG, PetL, PetM and PetN. The complex functions as a dimer.

The protein localises to the cellular thylakoid membrane. Its function is as follows. Component of the cytochrome b6-f complex, which mediates electron transfer between photosystem II (PSII) and photosystem I (PSI), cyclic electron flow around PSI, and state transitions. PetL is important for photoautotrophic growth as well as for electron transfer efficiency and stability of the cytochrome b6-f complex. The sequence is that of Cytochrome b6-f complex subunit 6 from Nostoc sp. (strain PCC 7120 / SAG 25.82 / UTEX 2576).